The following is a 567-amino-acid chain: Geranylgeranyl transferase type-2 subunit alpha (567 aa).

PFTA repeat units follow at residues 44–78 (LDES…QLET), 88–122 (LVKA…RLPE), 124–158 (NWTR…QAAV), 159–193 (PPAE…QLHP), 207–241 (VLLK…RADP), and 363–397 (VLQS…ALDP). Residue Ser98 is modified to Phosphoserine. LRR repeat units lie at residues 442-463 (EVRV…EQLL), 464-486 (LVTH…AALR), 487-508 (CLEV…TNLP), 509-530 (RLQE…QPLA), and 534-555 (RLVL…LEQL).

The protein belongs to the protein prenyltransferase subunit alpha family. As to quaternary structure, heterotrimer composed of RABGGTA, RABGGTB and CHM; within this trimer, RABGGTA and RABGGTB form the catalytic component B, while CHM (component A) mediates peptide substrate binding. The Rab GGTase dimer (RGGT) interacts with CHM (component A) prior to Rab protein binding; the association is stabilized by geranylgeranyl pyrophosphate (GGpp). The CHM:RGGT:Rab complex is destabilized by GGpp. Interacts with non-phosphorylated form of RAB8A; phosphorylation of RAB8A at 'Thr-72' disrupts this interaction.

It catalyses the reaction geranylgeranyl diphosphate + L-cysteinyl-[protein] = S-geranylgeranyl-L-cysteinyl-[protein] + diphosphate. Its activity is regulated as follows. The enzymatic reaction requires the aid of a Rab escort protein (also called component A), such as CHM. Catalyzes the transfer of a geranylgeranyl moiety from geranylgeranyl diphosphate to both cysteines of Rab proteins with the C-terminal sequence -XXCC, -XCXC and -CCXX, such as RAB1A, RAB3A, RAB5A and RAB7A. The polypeptide is Geranylgeranyl transferase type-2 subunit alpha (RABGGTA) (Pongo abelii (Sumatran orangutan)).